The sequence spans 266 residues: Large ribosomal subunit protein uL4 (266 aa).

It belongs to the universal ribosomal protein uL4 family. In terms of assembly, part of the 50S ribosomal subunit.

Its function is as follows. One of the primary rRNA binding proteins, this protein initially binds near the 5'-end of the 23S rRNA. It is important during the early stages of 50S assembly. It makes multiple contacts with different domains of the 23S rRNA in the assembled 50S subunit and ribosome. Functionally, forms part of the polypeptide exit tunnel. This is Large ribosomal subunit protein uL4 from Sulfurisphaera tokodaii (strain DSM 16993 / JCM 10545 / NBRC 100140 / 7) (Sulfolobus tokodaii).